We begin with the raw amino-acid sequence, 254 residues long: Glucosamine-6-phosphate deaminase (254 aa).

The active-site Proton acceptor; for enolization step is Asp-65. Asn-134 (for ring-opening step) is an active-site residue. Residue His-136 is the Proton acceptor; for ring-opening step of the active site. Catalysis depends on Glu-141, which acts as the For ring-opening step.

This sequence belongs to the glucosamine/galactosamine-6-phosphate isomerase family. NagB subfamily.

The enzyme catalyses alpha-D-glucosamine 6-phosphate + H2O = beta-D-fructose 6-phosphate + NH4(+). The protein operates within amino-sugar metabolism; N-acetylneuraminate degradation; D-fructose 6-phosphate from N-acetylneuraminate: step 5/5. Functionally, catalyzes the reversible isomerization-deamination of glucosamine 6-phosphate (GlcN6P) to form fructose 6-phosphate (Fru6P) and ammonium ion. This is Glucosamine-6-phosphate deaminase from Corynebacterium aurimucosum (strain ATCC 700975 / DSM 44827 / CIP 107346 / CN-1) (Corynebacterium nigricans).